A 188-amino-acid polypeptide reads, in one-letter code: Elongation factor P (188 aa).

Belongs to the elongation factor P family.

It is found in the cytoplasm. The protein operates within protein biosynthesis; polypeptide chain elongation. Involved in peptide bond synthesis. Stimulates efficient translation and peptide-bond synthesis on native or reconstituted 70S ribosomes in vitro. Probably functions indirectly by altering the affinity of the ribosome for aminoacyl-tRNA, thus increasing their reactivity as acceptors for peptidyl transferase. The sequence is that of Elongation factor P from Sulfurimonas denitrificans (strain ATCC 33889 / DSM 1251) (Thiomicrospira denitrificans (strain ATCC 33889 / DSM 1251)).